A 421-amino-acid chain; its full sequence is Nacrein-like protein M (421 aa).

Asparagine 27 is a glycosylation site (N-linked (GlcNAc...) asparagine). In terms of domain architecture, Alpha-carbonic anhydrase spans alanine 33–phenylalanine 420. 3 residues coordinate Zn(2+): histidine 132, histidine 134, and histidine 157. Residues aspartate 197–glutamate 206 show a composition bias toward acidic residues. The disordered stretch occupies residues aspartate 197–arginine 303. Residues glutamate 207–asparagine 219 show a composition bias toward basic and acidic residues. Residues asparagine 220 to glutamate 295 show a composition bias toward low complexity. A run of 24 repeats spans residues glycine 225–asparagine 227, glycine 228–asparagine 230, glycine 231–asparagine 233, glycine 234–asparagine 236, glycine 237–asparagine 239, glycine 240–asparagine 242, glycine 243–asparagine 245, glycine 246–asparagine 248, glycine 249–asparagine 251, glycine 252–asparagine 254, glycine 255–asparagine 257, glycine 258–asparagine 260, glycine 261–asparagine 263, glycine 264–asparagine 266, glycine 267–asparagine 269, glycine 270–asparagine 272, glycine 273–asparagine 275, glycine 276–asparagine 278, glycine 279–asparagine 281, glycine 282–asparagine 284, glycine 285–asparagine 287, glycine 288–asparagine 290, glycine 291–asparagine 292, and glycine 294–asparagine 296. Residues glycine 225–asparagine 296 form a 24 X 3 AA approximate tandem repeats of G-X-N region. A substrate-binding site is contributed by threonine 361–threonine 362.

The protein belongs to the alpha-carbonic anhydrase family. In terms of assembly, homooligomer; disulfide-linked. May also be disulfide-linked to insoluble organic matrix. Zn(2+) is required as a cofactor. In terms of tissue distribution, expressed in the mantle.

The protein localises to the secreted. It is found in the extracellular space. Its subcellular location is the extracellular matrix. The catalysed reaction is hydrogencarbonate + H(+) = CO2 + H2O. Functionally, acts as a negative regulator for calcification in the shells of mollusks. May function both as a calcium concentrator and as a carbonic anhydrase required for production of carbonate ions, which are assembled to CaCO(3) at mineralization sites. Is important for shell formation in both the calcitic prismatic layer and the aragonitic nacreous layerr. Shows inhibitory activity of crystal formation when present in free state but, when attached to the insoluble matrix, may regulate the form and size of aragonite crystal. This Pinctada maxima (Silver-lipped pearl oyster) protein is Nacrein-like protein M.